The sequence spans 233 residues: Adenosylcobinamide-GDP ribazoletransferase (233 aa).

The next 7 membrane-spanning stretches (helical) occupy residues 24–44, 46–66, 96–116, 117–137, 158–178, 181–198, and 209–229; these read LWAL…VLYL, LPLS…LLHL, IAGV…LPLL, PFYA…LALA, QLTL…YIEP, ISSL…RLSL, and IGAV…VVWV.

Belongs to the CobS family. The cofactor is Mg(2+).

The protein resides in the cell membrane. It catalyses the reaction alpha-ribazole + adenosylcob(III)inamide-GDP = adenosylcob(III)alamin + GMP + H(+). The catalysed reaction is alpha-ribazole 5'-phosphate + adenosylcob(III)inamide-GDP = adenosylcob(III)alamin 5'-phosphate + GMP + H(+). It functions in the pathway cofactor biosynthesis; adenosylcobalamin biosynthesis; adenosylcobalamin from cob(II)yrinate a,c-diamide: step 7/7. Joins adenosylcobinamide-GDP and alpha-ribazole to generate adenosylcobalamin (Ado-cobalamin). Also synthesizes adenosylcobalamin 5'-phosphate from adenosylcobinamide-GDP and alpha-ribazole 5'-phosphate. The polypeptide is Adenosylcobinamide-GDP ribazoletransferase (Thermococcus gammatolerans (strain DSM 15229 / JCM 11827 / EJ3)).